Reading from the N-terminus, the 537-residue chain is 5,6-dihydroxyindole-2-carboxylic acid oxidase (537 aa).

Positions Met-1–Ala-24 are cleaved as a signal peptide. At Gln-25 to Glu-477 the chain is on the lumenal, melanosome side. 5 disulfide bridges follow: Cys-30–Cys-41, Cys-42–Cys-65, Cys-56–Cys-99, Cys-101–Cys-110, and Cys-113–Cys-122. 2 N-linked (GlcNAc...) asparagine glycosylation sites follow: Asn-96 and Asn-104. A glycan (N-linked (GlcNAc...) asparagine) is linked at Asn-181. Residues His-192, His-215, and His-224 each contribute to the Zn(2+) site. Intrachain disulfides connect Cys-258–Cys-261 and Cys-290–Cys-303. N-linked (GlcNAc...) asparagine glycosylation is found at Asn-304 and Asn-350. Zn(2+) is bound by residues His-377 and His-381. An N-linked (GlcNAc...) asparagine glycan is attached at Asn-385. Zn(2+) is bound at residue His-404. The helical transmembrane segment at Ile-478–Ile-501 threads the bilayer. Over Arg-502–Val-537 the chain is Cytoplasmic.

Belongs to the tyrosinase family. As to quaternary structure, monomer. Interacts with ATP7A. Interacts with SLC45A2. Requires Cu(2+) as cofactor. It depends on Zn(2+) as a cofactor. Glycosylated. Pigment cells.

The protein localises to the melanosome membrane. It catalyses the reaction 2 5,6-dihydroxyindole-2-carboxylate + O2 = 2 indole-5,6-quinone-2-carboxylate + 2 H2O. It participates in pigment biosynthesis; melanin biosynthesis. The activity depends critically on the nature of the bound metal ion. Catalyzes the oxidation of 5,6-dihydroxyindole-2-carboxylic acid (DHICA) in the presence of bound Cu(2+) ions, but lacks activity in the presence of bound Zn(2+) ions. Plays a role in melanin biosynthesis. Catalyzes the oxidation of 5,6-dihydroxyindole-2-carboxylic acid (DHICA) into indole-5,6-quinone-2-carboxylic acid in the presence of bound Cu(2+) ions, but not in the presence of Zn(2+). May regulate or influence the type of melanin synthesized. Also to a lower extent, capable of hydroxylating tyrosine and producing melanin. This chain is 5,6-dihydroxyindole-2-carboxylic acid oxidase, found in Homo sapiens (Human).